The primary structure comprises 211 residues: MANNLEQILREKLEILLQSTALSLSSQQKQQLVKLVLLLNKWNKAYNLTSVRDPQEMLVKHILDSLVVSPYLRGERFIDVGTGPGLPGLPLAIINPDKKFVLLDSLGKRMSFIRNAVRELELTNVEPVLSRVEEYIPDHKFDGVLSRAFASLKDMTDWCSHLPVNNGLFYALKGQYNEDEIKQLDEKFTIQQVIKLDVPELQGKRHLILIK.

Residues G81, L86, 132-133, and R147 contribute to the S-adenosyl-L-methionine site; that span reads VE.

This sequence belongs to the methyltransferase superfamily. RNA methyltransferase RsmG family.

The protein resides in the cytoplasm. It carries out the reaction guanosine(527) in 16S rRNA + S-adenosyl-L-methionine = N(7)-methylguanosine(527) in 16S rRNA + S-adenosyl-L-homocysteine. In terms of biological role, specifically methylates the N7 position of guanine in position 527 of 16S rRNA. In Actinobacillus succinogenes (strain ATCC 55618 / DSM 22257 / CCUG 43843 / 130Z), this protein is Ribosomal RNA small subunit methyltransferase G.